The primary structure comprises 487 residues: E3 ubiquitin-protein ligase TRIM50 (487 aa).

The RING-type zinc-finger motif lies at 16–57; the sequence is CPICLEVFKEPLMLQCGHSYCKGCLVSLSCHLDAELRCPVCR. The segment at 84 to 125 adopts a B box-type zinc-finger fold; the sequence is PEPKVCVHHRNPLSLFCEKDQELICGLCGLLGSHQHHPVTPV. Positions 89, 92, 111, and 117 each coordinate Zn(2+). Coiled-coil stretches lie at residues 125 to 169 and 204 to 235; these read VSTV…NESD and LVASLDMQLEQAQGTRERLAQAECVLEQFGNE. The B30.2/SPRY domain occupies 276-475; the sequence is DIKLTVWKRL…LPMVLPPPSG (200 aa). The residue at position 373 (Lys-373) is an N6-acetyllysine. Residues 468 to 487 form a disordered region; the sequence is MVLPPPSGPGPLSPEQPTKL. The span at 469–481 shows a compositional bias: pro residues; sequence VLPPPSGPGPLSP.

The protein belongs to the TRIM/RBCC family. In terms of assembly, can form dimers and trimers. Interacts with several E2 ubiquitin-conjugating enzymes, including UBE2L6, UBE2E1, UBE2E3. No interaction with UBE2H. Interacts with BECN1. Interacts with SQSTM1. Interacts with NLRP3. Post-translationally, auto-ubiquitinated. In terms of processing, acetylated by EP300 and KAT2B. HDAC6 drives TRIM50 deacetylation. Acetylation antagonizes with TRIM50 ubiquitination.

Its subcellular location is the cytoplasm. It catalyses the reaction S-ubiquitinyl-[E2 ubiquitin-conjugating enzyme]-L-cysteine + [acceptor protein]-L-lysine = [E2 ubiquitin-conjugating enzyme]-L-cysteine + N(6)-ubiquitinyl-[acceptor protein]-L-lysine.. Its function is as follows. E3 ubiquitin-protein ligase that ubiquitinates Beclin-1/BECN1 in a 'Lys-63'-dependent manner enhancing its binding to ULK1. In turn, promotes starvation-induced autophagy activation. Also interacts with p62/SQSTM1 protein and thereby induces the formation and the autophagy clearance of aggresome-associated polyubiquitinated proteins through HDAC6 interaction. Also promotes NLRP3 inflammasome activation by directly inducing NLRP3 oligomerization independent of its E3 ligase function. The sequence is that of E3 ubiquitin-protein ligase TRIM50 from Homo sapiens (Human).